The sequence spans 323 residues: Acetyl-coenzyme A carboxylase carboxyl transferase subunit alpha (323 aa).

Positions 36-293 (ELELLSAKAQ…KEEVVKNLQI (258 aa)) constitute a CoA carboxyltransferase C-terminal domain.

This sequence belongs to the AccA family. Acetyl-CoA carboxylase is a heterohexamer composed of biotin carboxyl carrier protein (AccB), biotin carboxylase (AccC) and two subunits each of ACCase subunit alpha (AccA) and ACCase subunit beta (AccD).

The protein localises to the cytoplasm. The catalysed reaction is N(6)-carboxybiotinyl-L-lysyl-[protein] + acetyl-CoA = N(6)-biotinyl-L-lysyl-[protein] + malonyl-CoA. It participates in lipid metabolism; malonyl-CoA biosynthesis; malonyl-CoA from acetyl-CoA: step 1/1. In terms of biological role, component of the acetyl coenzyme A carboxylase (ACC) complex. First, biotin carboxylase catalyzes the carboxylation of biotin on its carrier protein (BCCP) and then the CO(2) group is transferred by the carboxyltransferase to acetyl-CoA to form malonyl-CoA. In Carboxydothermus hydrogenoformans (strain ATCC BAA-161 / DSM 6008 / Z-2901), this protein is Acetyl-coenzyme A carboxylase carboxyl transferase subunit alpha.